A 147-amino-acid chain; its full sequence is MADNDNEDIIMDDLVEEYVETEEENFVDSEEESEDKDEIVESPSICEGFVQASSQTLVIIPDNERITSNVLTTFEATRLVAVRAQQLAINGSTMLKKKYSSPIDIAKQELFNRKIPLLVMRCIKVTPEGQKIVEIWNPREMGIPLLD.

The protein belongs to the archaeal RpoK/eukaryotic RPB6 RNA polymerase subunit family. In terms of assembly, part of the viral DNA-directed RNA polymerase that consists of 8 polII-like subunits (RPB1, RPB2, RPB3, RPB5, RPB6, RPB7, RPB9, RPB10), a capping enzyme and a termination factor.

It is found in the host cytoplasm. It localises to the virion. Component of the DNA-directed RNA polymerase (RNAP) that catalyzes the transcription in the cytoplasm of viral DNA into RNA using the four ribonucleoside triphosphates as substrates. The polypeptide is DNA-directed RNA polymerase RPB6 homolog (Ornithodoros (relapsing fever ticks)).